The following is a 2209-amino-acid chain: Genome polyprotein (2209 aa).

G2 carries the N-myristoyl glycine; by host lipid modification. The Cytoplasmic portion of the chain corresponds to 2–1520 (GAQVSSQKVG…NINRAMTILQ (1519 aa)). The segment at 580-600 (GLGQMLESMIDNTVRETVGAA) is amphipathic alpha-helix. Positions 599-619 (AATSRDALPNTEASGPTHSKE) are disordered. Catalysis depends on for protease 2A activity residues H901 and D919. Zn(2+) is bound by residues C936 and C938. The active-site For protease 2A activity is the C990. Zn(2+) contacts are provided by C996 and H998. Residues 1128–1200 (GDSWLKKFTE…HQSCPSQEHQ (73 aa)) form a membrane-binding region. The segment at 1128–1266 (GDSWLKKFTE…SPGTGKSVAT (139 aa)) is oligomerization. The RNA-binding stretch occupies residues 1149 to 1153 (SNKIS). In terms of domain architecture, SF3 helicase spans 1232 to 1388 (EHTINNYIQF…NEYSRDGKLN (157 aa)). Residue 1256–1263 (GSPGTGKS) coordinates ATP. The Zn(2+) site is built by C1396, C1399, C1408, and C1413. The C4-type zinc finger occupies 1396-1413 (CKNCHQPANFKRCCPLVC). The interval 1440-1447 (ERNRRSNI) is RNA-binding. The interval 1451–1456 (MEALFQ) is oligomerization. An intramembrane segment occupies 1521–1536 (AVTTFAAVAGVVYVMY). Residues 1537 to 2209 (KLFAGHQGAY…TLYRRWLDSF (673 aa)) lie on the Cytoplasmic side of the membrane. Y1546 is subject to O-(5'-phospho-RNA)-tyrosine. Position 1546 is an O-UMP-tyrosine; transient (Y1546). The Peptidase C3 domain occupies 1566-1744 (GPGFDYAVAM…FAAALKRSYF (179 aa)). Catalysis depends on for protease 3C activity residues H1605, E1636, and C1712. The RdRp catalytic domain maps to 1975–2090 (EKLFAFDYTG…SYPHEVDASL (116 aa)). Residues D1981 and D2076 each coordinate Mg(2+).

It belongs to the picornaviruses polyprotein family. As to quaternary structure, interacts with capsid protein VP1 and capsid protein VP3 to form heterotrimeric protomers. In terms of assembly, interacts with capsid protein VP0, and capsid protein VP3 to form heterotrimeric protomers. Five protomers subsequently associate to form pentamers which serve as building blocks for the capsid. Interacts with capsid protein VP2, capsid protein VP3 and capsid protein VP4 following cleavage of capsid protein VP0. Interacts with human PVR. Interacts with capsid protein VP1 and capsid protein VP3 in the mature capsid. As to quaternary structure, interacts with capsid protein VP0 and capsid protein VP1 to form heterotrimeric protomers. Five protomers subsequently associate to form pentamers which serve as building blocks for the capsid. Interacts with capsid protein VP4 in the mature capsid. Interacts with protein 2C; this interaction may be important for virion morphogenesis. In terms of assembly, interacts with capsid protein VP1 and capsid protein VP3. Homodimer. As to quaternary structure, homohexamer; forms a hexameric ring structure with 6-fold symmetry characteristic of AAA+ ATPases. Interacts (via N-terminus) with host RTN3 (via reticulon domain); this interaction is important for viral replication. Interacts with capsid protein VP3; this interaction may be important for virion morphogenesis. In terms of assembly, interacts with protein 3CD. Homodimer. Interacts with host GBF1. Interacts (via GOLD domain) with host ACBD3 (via GOLD domain); this interaction allows the formation of a viral protein 3A/ACBD3 heterotetramer with a 2:2 stoichiometry, which will stimulate the recruitment of host PI4KB in order to synthesize PI4P at the viral RNA replication sites. As to quaternary structure, interacts with RNA-directed RNA polymerase. In terms of assembly, interacts with protein 3AB and with RNA-directed RNA polymerase. Interacts with Viral protein genome-linked and with protein 3CD. Requires Mg(2+) as cofactor. Post-translationally, specific enzymatic cleavages in vivo by the viral proteases yield processing intermediates and the mature proteins. In terms of processing, myristoylation is required for the formation of pentamers during virus assembly. Further assembly of 12 pentamers and a molecule of genomic RNA generates the provirion. During virion maturation, immature virions are rendered infectious following cleavage of VP0 into VP4 and VP2. This maturation seems to be an autocatalytic event triggered by the presence of RNA in the capsid and it is followed by a conformational change infectious virion. Post-translationally, myristoylation is required during RNA encapsidation and formation of the mature virus particle. In terms of processing, VPg is uridylylated by the polymerase into VPg-pUpU. This acts as a nucleotide-peptide primer for the genomic RNA replication.

It localises to the virion. The protein localises to the host cytoplasm. It is found in the host cytoplasmic vesicle membrane. Its subcellular location is the host nucleus. It catalyses the reaction RNA(n) + a ribonucleoside 5'-triphosphate = RNA(n+1) + diphosphate. The catalysed reaction is Selective cleavage of Tyr-|-Gly bond in the picornavirus polyprotein.. It carries out the reaction a ribonucleoside 5'-triphosphate + H2O = a ribonucleoside 5'-diphosphate + phosphate + H(+). The enzyme catalyses Selective cleavage of Gln-|-Gly bond in the poliovirus polyprotein. In other picornavirus reactions Glu may be substituted for Gln, and Ser or Thr for Gly.. With respect to regulation, replication or transcription is subject to high level of random mutations by the nucleotide analog ribavirin. In terms of biological role, forms an icosahedral capsid of pseudo T=3 symmetry with capsid proteins VP2 and VP3. The capsid is 300 Angstroms in diameter, composed of 60 copies of each capsid protein and enclosing the viral positive strand RNA genome. Capsid protein VP1 mainly forms the vertices of the capsid. Capsid protein VP1 interacts with host cell receptor PVR to provide virion attachment to target host epithelial cells. This attachment induces virion internalization predominantly through clathrin- and caveolin-independent endocytosis in Hela cells and through caveolin-mediated endocytosis in brain microvascular endothelial cells. Tyrosine kinases are probably involved in the entry process. Virus binding to PVR induces increased junctional permeability and rearrangement of junctional proteins. Modulation of endothelial tight junctions, as well as cytolytic infection of endothelial cells themselves, may result in loss of endothelial integrity which may help the virus to reach the CNS. After binding to its receptor, the capsid undergoes conformational changes. Capsid protein VP1 N-terminus (that contains an amphipathic alpha-helix) and capsid protein VP4 are externalized. Together, they shape a pore in the host membrane through which viral genome is translocated to host cell cytoplasm. Its function is as follows. Forms an icosahedral capsid of pseudo T=3 symmetry with capsid proteins VP1 and VP3. The capsid is 300 Angstroms in diameter, composed of 60 copies of each capsid protein and enclosing the viral positive strand RNA genome. Functionally, forms an icosahedral capsid of pseudo T=3 symmetry with capsid proteins VP2 and VP1. The capsid is 300 Angstroms in diameter, composed of 60 copies of each capsid protein and enclosing the viral positive strand RNA genome. Lies on the inner surface of the capsid shell. After binding to the host receptor, the capsid undergoes conformational changes. Capsid protein VP4 is released, Capsid protein VP1 N-terminus is externalized, and together, they shape a pore in the host membrane through which the viral genome is translocated into the host cell cytoplasm. In terms of biological role, component of immature procapsids, which is cleaved into capsid proteins VP4 and VP2 after maturation. Allows the capsid to remain inactive before the maturation step. Its function is as follows. Cysteine protease that cleaves viral polyprotein and specific host proteins. It is responsible for the autocatalytic cleavage between the P1 and P2 regions, which is the first cleavage occurring in the polyprotein. Also cleaves the host translation initiation factor EIF4G1, in order to shut down the capped cellular mRNA translation. Inhibits the host nucleus-cytoplasm protein and RNA trafficking by cleaving host members of the nuclear pores including NUP98, NUP62 and NUP153. Counteracts stress granule formation probably by antagonizing its assembly or promoting its dissassembly. Cleaves and inhibits host IFIH1/MDA5, thereby inhibiting the type-I IFN production and the establishment of the antiviral state. Cleaves and inhibits host MAVS, thereby inhibiting the type-I IFN production and the establishment of the antiviral state. Functionally, plays an essential role in the virus replication cycle by acting as a viroporin. Creates a pore in the host endoplasmic reticulum and as a consequence releases Ca2+ in the cytoplasm of infected cell. In turn, high levels of cytoplasmic calcium may trigger membrane trafficking and transport of viral ER-associated proteins to viroplasms, sites of viral genome replication. Induces and associates with structural rearrangements of intracellular membranes. Displays RNA-binding, nucleotide binding and NTPase activities. May play a role in virion morphogenesis and viral RNA encapsidation by interacting with the capsid protein VP3. In terms of biological role, localizes the viral replication complex to the surface of membranous vesicles. Together with protein 3CD binds the Cis-Active RNA Element (CRE) which is involved in RNA synthesis initiation. Acts as a cofactor to stimulate the activity of 3D polymerase, maybe through a nucleid acid chaperone activity. Its function is as follows. Localizes the viral replication complex to the surface of membranous vesicles. It inhibits host cell endoplasmic reticulum-to-Golgi apparatus transport and causes the disassembly of the Golgi complex, possibly through GBF1 interaction. This would result in depletion of MHC, trail receptors and IFN receptors at the host cell surface. Plays an essential role in viral RNA replication by recruiting ACBD3 and PI4KB at the viral replication sites, thereby allowing the formation of the rearranged membranous structures where viral replication takes place. Functionally, acts as a primer for viral RNA replication and remains covalently bound to viral genomic RNA. VPg is uridylylated prior to priming replication into VPg-pUpU. The oriI viral genomic sequence may act as a template for this. The VPg-pUpU is then used as primer on the genomic RNA poly(A) by the RNA-dependent RNA polymerase to replicate the viral genome. During genome replication, the VPg-RNA linkage is removed by the host TDP2, thereby accelerating replication. During the late stage of the replication cycle, host TDP2 is excluded from sites of viral RNA synthesis and encapsidation, allowing for the generation of progeny virions. Involved in the viral replication complex and viral polypeptide maturation. It exhibits protease activity with a specificity and catalytic efficiency that is different from protease 3C. Protein 3CD binds to the 5'UTR of the viral genome. In terms of biological role, major viral protease that mediates proteolytic processing of the polyprotein. Cleaves host EIF5B, contributing to host translation shutoff. Cleaves also host PABPC1, contributing to host translation shutoff. Cleaves host RIGI and thus contributes to the inhibition of type I interferon production. Cleaves host NLRP1, triggers host N-glycine-mediated degradation of the autoinhibitory NLRP1 N-terminal fragment. Inhibits the integrated stress response (ISR) in the infected cell by cleaving host G3BP1. Stress granule formation is thus inhibited, which allows protein synthesis and viral replication. Its function is as follows. Replicates the viral genomic RNA on the surface of intracellular membranes. May form linear arrays of subunits that propagate along a strong head-to-tail interaction called interface-I. Covalently attaches UMP to a tyrosine of VPg, which is used to prime RNA synthesis. The positive stranded RNA genome is first replicated at virus induced membranous vesicles, creating a dsRNA genomic replication form. This dsRNA is then used as template to synthesize positive stranded RNA genomes. ss(+)RNA genomes are either translated, replicated or encapsidated. This chain is Genome polyprotein, found in Homo sapiens (Human).